Consider the following 318-residue polypeptide: Large ribosomal subunit protein uL10 (318 aa).

Tyr24 carries the phosphotyrosine modification. The residue at position 59 (Thr59) is a Phosphothreonine. Lys264 is covalently cross-linked (Glycyl lysine isopeptide (Lys-Gly) (interchain with G-Cter in ubiquitin)). Lys298 is covalently cross-linked (Glycyl lysine isopeptide (Lys-Gly) (interchain with G-Cter in SUMO1); alternate). A Glycyl lysine isopeptide (Lys-Gly) (interchain with G-Cter in SUMO2); alternate cross-link involves residue Lys298. A disordered region spans residues 298 to 318; it reads KVEAKEESEESDEDMGFGLFD. Residues 303–312 are compositionally biased toward acidic residues; that stretch reads EESEESDEDM. Residues Ser305 and Ser308 each carry the phosphoserine modification.

It belongs to the universal ribosomal protein uL10 family. As to quaternary structure, P0 forms a pentameric complex by interaction with dimers of P1 and P2. Identified in a IGF2BP1-dependent mRNP granule complex containing untranslated mRNAs. Interacts with APEX1. Interacts with FMR1. Ubiquitinated at Lys-264 by RNF14 and RNF25 in response to ribosome collisions (ribosome stalling).

The protein localises to the nucleus. Its subcellular location is the cytoplasm. Its function is as follows. Ribosomal protein P0 is the functional equivalent of E.coli protein L10. In Sus scrofa (Pig), this protein is Large ribosomal subunit protein uL10 (RPLP0).